A 717-amino-acid polypeptide reads, in one-letter code: Delta-1-pyrroline-5-carboxylate synthase (717 aa).

The tract at residues 1-296 is glutamate 5-kinase; that stretch reads METVDSTRAF…WASIGETDAR (296 aa). The substrate site is built by serine 60, aspartate 157, and asparagine 176. Residues 196–197 and 236–242 contribute to the ATP site; these read SD and RGGMTAK. The segment at 297–717 is gamma-glutamyl phosphate reductase; it reads EMAVAARACS…YSHKDLTQQG (421 aa).

This sequence in the N-terminal section; belongs to the glutamate 5-kinase family. It in the C-terminal section; belongs to the gamma-glutamyl phosphate reductase family. In terms of tissue distribution, expressed at high levels in leaves and is inducible in roots subjected to salt stress.

The enzyme catalyses L-glutamate + ATP = L-glutamyl 5-phosphate + ADP. The catalysed reaction is L-glutamate 5-semialdehyde + phosphate + NADP(+) = L-glutamyl 5-phosphate + NADPH + H(+). It functions in the pathway amino-acid biosynthesis; L-proline biosynthesis; L-glutamate 5-semialdehyde from L-glutamate: step 1/2. Its pathway is amino-acid biosynthesis; L-proline biosynthesis; L-glutamate 5-semialdehyde from L-glutamate: step 2/2. Its activity is regulated as follows. Feedback regulated by proline. Functionally, P5CS plays a key role in proline biosynthesis, leading to osmoregulation in plants. The polypeptide is Delta-1-pyrroline-5-carboxylate synthase (PRO2) (Solanum lycopersicum (Tomato)).